Here is a 455-residue protein sequence, read N- to C-terminus: Probable Xaa-Pro aminopeptidase GSTUM_00008071001 (455 aa).

Residues Asp-251, Asp-262, Glu-386, and Glu-426 each coordinate Mn(2+).

It belongs to the peptidase M24B family. It depends on Mn(2+) as a cofactor.

The catalysed reaction is Release of any N-terminal amino acid, including proline, that is linked to proline, even from a dipeptide or tripeptide.. Catalyzes the removal of a penultimate prolyl residue from the N-termini of peptides. The polypeptide is Probable Xaa-Pro aminopeptidase GSTUM_00008071001 (Tuber melanosporum (strain Mel28) (Perigord black truffle)).